A 399-amino-acid polypeptide reads, in one-letter code: uncharacterized protein (399 aa).

A run of 9 helical transmembrane segments spans residues 46 to 66, 76 to 95, 139 to 159, 181 to 201, 226 to 246, 262 to 282, 303 to 323, 330 to 350, and 352 to 372; these read IAPYLITLTGTITILLSFFIV, TLPRWVYAMSGLTLFFYQTM, GVGYISLIQLFITALLPFWMA, IIIIVCALLSTAIFGNAFWTF, LMLNEIIVASLSLPCLITCFF, ILPALKHILVWVIITVSSFIW, VQFSIGIIFGELVSRLILAHM, IIQAPLYPLILSTFCSTINYF, and GTIIIPENLLLILFTVTSFVH.

This sequence belongs to the CDP-alcohol phosphatidyltransferase class-I family.

It is found in the membrane. This is an uncharacterized protein from Dictyostelium discoideum (Social amoeba).